Reading from the N-terminus, the 215-residue chain is Protein GrpE (215 aa).

The span at 1-28 (MKHTSDTPSNSDMPSDSQATQPNASATG) shows a compositional bias: polar residues. A disordered region spans residues 1–52 (MKHTSDTPSNSDMPSDSQATQPNASATGQAAHAYSSQAQRASADAQAVAGDE). Residues 29 to 52 (QAAHAYSSQAQRASADAQAVAGDE) are compositionally biased toward low complexity.

Belongs to the GrpE family. Homodimer.

It is found in the cytoplasm. In terms of biological role, participates actively in the response to hyperosmotic and heat shock by preventing the aggregation of stress-denatured proteins, in association with DnaK and GrpE. It is the nucleotide exchange factor for DnaK and may function as a thermosensor. Unfolded proteins bind initially to DnaJ; upon interaction with the DnaJ-bound protein, DnaK hydrolyzes its bound ATP, resulting in the formation of a stable complex. GrpE releases ADP from DnaK; ATP binding to DnaK triggers the release of the substrate protein, thus completing the reaction cycle. Several rounds of ATP-dependent interactions between DnaJ, DnaK and GrpE are required for fully efficient folding. This chain is Protein GrpE, found in Ralstonia pickettii (strain 12J).